Consider the following 251-residue polypeptide: Triosephosphate isomerase (251 aa).

9–11 contributes to the substrate binding site; it reads NWK. His95 acts as the Electrophile in catalysis. Glu167 (proton acceptor) is an active-site residue. Substrate is bound by residues Gly173, Ser213, and 234–235; that span reads GG. Ser213 carries the post-translational modification Phosphoserine.

It belongs to the triosephosphate isomerase family. Homodimer.

The protein localises to the cytoplasm. The catalysed reaction is D-glyceraldehyde 3-phosphate = dihydroxyacetone phosphate. It participates in carbohydrate biosynthesis; gluconeogenesis. Its pathway is carbohydrate degradation; glycolysis; D-glyceraldehyde 3-phosphate from glycerone phosphate: step 1/1. Functionally, involved in the gluconeogenesis. Catalyzes stereospecifically the conversion of dihydroxyacetone phosphate (DHAP) to D-glyceraldehyde-3-phosphate (G3P). This chain is Triosephosphate isomerase, found in Halalkalibacterium halodurans (strain ATCC BAA-125 / DSM 18197 / FERM 7344 / JCM 9153 / C-125) (Bacillus halodurans).